Reading from the N-terminus, the 466-residue chain is MSVVPVVDVLQGRMPADSEITVQGWVRTRRDSKAGISFLAVYDGSCFDPLQAVINNTLPNYQNDILRLTSGCSVSVTGRVVESLGGGQRYEIQAQAIEVLGWVDDPDTYPMAAKRHSVEYLREVAHLRPRTNLIGAVARVRHTLAQAIHRFMDEQGFFWVSTPLITASDTEGAGEMFRVSTLDLENLPRTPDGKVNYDEDFFGKEAFLTVSGQLNGESYACALSKIYTFGPTFRAENSNTSRHLAEFWMAEPEVAFATLDDAAGLAEAMLKYVFQAVLTERADDMQFFAERIDKEAINRLKQFISADFAQVDYTKAVEILQNCGQTFENPVSWGIDLSSEHERYLAEKHFKAPVVVKNYPKDIKAFYMRMNDDGKTVAAMDVLAPGIGEIIGGSQREERLDRLDQRLAEMGLNKDDYWWYRDLRRYGTVPHSGFGLGFERLIVYVTGMQNIRDVIPFPRSPRNANF.

The protein belongs to the class-II aminoacyl-tRNA synthetase family. As to quaternary structure, homodimer.

The protein localises to the cytoplasm. The enzyme catalyses tRNA(Asn) + L-asparagine + ATP = L-asparaginyl-tRNA(Asn) + AMP + diphosphate + H(+). The polypeptide is Asparagine--tRNA ligase (Sodalis glossinidius (strain morsitans)).